The following is a 674-amino-acid chain: Sodium/myo-inositol cotransporter 2 (674 aa).

The Extracellular segment spans residues 1–25 (MESSASSPPLTQSDPLEAFPRRTLE). Residues 26 to 46 (AGDIAVLVLYFLFVLAVGLWS) form a helical membrane-spanning segment. The Cytoplasmic segment spans residues 47–56 (TVKTKRDTVK). A helical membrane pass occupies residues 57–77 (GYFLAGGNMLWWPVGASLFAS). Over 78–102 (NVGSGHFVGLAGSGAAAGLSVTAYE) the chain is Extracellular. The chain crosses the membrane as a helical span at residues 103–123 (LNGLFFVLMLSWIFLPIYITG). At 124–140 (QVTTMPEYLRKRFGGNR) the chain is on the cytoplasmic side. A helical membrane pass occupies residues 141-161 (IPIILAVLYLFIYIFTKISVD). At 162 to 180 (MYAGAIFIQQSLHVNLYLA) the chain is on the extracellular side. A helical membrane pass occupies residues 181–201 (IVGLLAVTALYTIAGGLAAVI). Residues 202–208 (YTDALQT) are Cytoplasmic-facing. A helical membrane pass occupies residues 209 to 229 (LIMLIGALILMGYSFAAVGGL). Over 230–272 (EGLEEKYFLAMASNRSGNSSCGLPREDAFHIFRDPVTSDLPWP) the chain is Extracellular. Residues 273–293 (GILFGMSIPSLWYWCTDQVIV) form a helical membrane-spanning segment. The Cytoplasmic segment spans residues 294–308 (QRTLAAKNLSHAKGG). A helical transmembrane segment spans residues 309-329 (SLMAAYLKVLPLFIMVFPGMV). The Extracellular portion of the chain corresponds to 330 to 374 (SRVLFPDEVACADPEICRKVCSNPAGCSDIAYPKLVLELLPTGLR). A helical transmembrane segment spans residues 375–397 (GLMMAVMVAALTSSLTSIFNSAS). At 398 to 418 (TIFTMDLWNHLRPRASEKELM) the chain is on the cytoplasmic side. The chain crosses the membrane as a helical span at residues 419–439 (IVGRVFVLLLVLVSILWIPVV). The Extracellular segment spans residues 440-446 (QASQGGQ). A helical transmembrane segment spans residues 447-467 (LFIYIQSISSYLQPPVAVVFI). At 468-479 (MGCFWKRANEKG) the chain is on the cytoplasmic side. A helical transmembrane segment spans residues 480-500 (AFFGLVLGLLLGLVRLILDFI). The Extracellular portion of the chain corresponds to 501–521 (YVQPRCDQLDERPAVVKDVHY). Residues 522 to 542 (LYFSMILSSVTLITVCAVSWF) traverse the membrane as a helical segment. The Cytoplasmic segment spans residues 543-653 (TEPPSKEMVS…SLEENPLVKT (111 aa)). Positions 567 to 589 (EQVPSATPPPLTLSQNGTPEASG) are disordered. Over residues 578–589 (TLSQNGTPEASG) the composition is skewed to polar residues. Residues 654-674 (LLDLNLIICISCAIFLWGYFA) traverse the membrane as a helical segment.

Belongs to the sodium:solute symporter (SSF) (TC 2.A.21) family.

It is found in the membrane. Its subcellular location is the apical cell membrane. The enzyme catalyses myo-inositol(out) + 2 Na(+)(out) = myo-inositol(in) + 2 Na(+)(in). The catalysed reaction is 1D-chiro-inositol(out) + 2 Na(+)(out) = 1D-chiro-inositol(in) + 2 Na(+)(in). It carries out the reaction D-glucose(out) + 2 Na(+)(out) = D-glucose(in) + 2 Na(+)(in). It catalyses the reaction D-xylose(out) + 2 Na(+)(out) = D-xylose(in) + 2 Na(+)(in). With respect to regulation, MI transport activity inhibited by D-chiro-inositol (DCI), phlorizin (Pz) and sodium (Na(+)). Insulin increases D-chiro-inositol uptake. Functionally, involved in the sodium-dependent cotransport of myo-inositol (MI) with a Na(+):MI stoichiometry of 2:1. Exclusively responsible for apical MI transport and absorption in intestine. Can also transport D-chiro-inositol (DCI) but not L-fucose. Exhibits stereospecific cotransport of both D-glucose and D-xylose. May induce apoptosis through the TNF-alpha, PDCD1 pathway. May play a role in the regulation of MI concentration in serum, involving reabsorption in at least the proximal tubule of the kidney. In Bos taurus (Bovine), this protein is Sodium/myo-inositol cotransporter 2.